We begin with the raw amino-acid sequence, 164 residues long: NADH-quinone oxidoreductase subunit I (164 aa).

4Fe-4S ferredoxin-type domains lie at 55-84 (RRYE…IEID) and 95-124 (KVYD…MGPY). Residues Cys-64, Cys-67, Cys-70, Cys-74, Cys-104, Cys-107, Cys-110, and Cys-114 each contribute to the [4Fe-4S] cluster site.

This sequence belongs to the complex I 23 kDa subunit family. NDH-1 is composed of 14 different subunits. Subunits NuoA, H, J, K, L, M, N constitute the membrane sector of the complex. Requires [4Fe-4S] cluster as cofactor.

It is found in the cell inner membrane. It carries out the reaction a quinone + NADH + 5 H(+)(in) = a quinol + NAD(+) + 4 H(+)(out). Functionally, NDH-1 shuttles electrons from NADH, via FMN and iron-sulfur (Fe-S) centers, to quinones in the respiratory chain. The immediate electron acceptor for the enzyme in this species is believed to be ubiquinone. Couples the redox reaction to proton translocation (for every two electrons transferred, four hydrogen ions are translocated across the cytoplasmic membrane), and thus conserves the redox energy in a proton gradient. The polypeptide is NADH-quinone oxidoreductase subunit I (Magnetococcus marinus (strain ATCC BAA-1437 / JCM 17883 / MC-1)).